Here is a 352-residue protein sequence, read N- to C-terminus: MWKIHNKLLIYILWIMEIRLVSSFTSVMLCGRIPGLTPGQRNMCREMPDALIALGEGHQLGAQECQHQFRGHRWNCSEVWQRNVFAHVIPTASREAAYTYAIASAGAAYAVTAACARGNISTCGCDVRHKATPTGGGTPDEPWKWGGCSADVDFGMRYARRFMDARELERDSRTLMNLHNNRAGRTLVKKMLRTDCKCHGVSGSCVMKTCWKSLPPFRLVGDRLMLKYQKAKTVQAVKGKRGLRLVLSRKKHAGTARAQKPVLDWPKRMELIYLEASPNYCERSLQTGSQGTSGRTCQRTGHGPQSCDLLCCGRGHNTQHIRRTTQCRCQFRWCCEVKCDECDESYEEFTCK.

An N-terminal signal peptide occupies residues 1–23 (MWKIHNKLLIYILWIMEIRLVSS). Disulfide bonds link Cys-65/Cys-76, Cys-115/Cys-123, Cys-125/Cys-148, Cys-196/Cys-210, Cys-198/Cys-205, Cys-281/Cys-312, Cys-297/Cys-307, Cys-311/Cys-351, Cys-327/Cys-342, Cys-329/Cys-339, and Cys-334/Cys-335. Residues Asn-75 and Asn-119 are each glycosylated (N-linked (GlcNAc...) asparagine). Ser-202 is lipidated: O-palmitoleoyl serine; by PORCN.

Belongs to the Wnt family. Post-translationally, palmitoleoylated by porcupine. The lipid group functions as a sorting signal, targeting the ligand to polarized vesicles that transport Wnt2 to unique sites at the cell surface. Depalmitoleoylated by notum, leading to inhibit Wnt signaling pathway. As to expression, dynamic expression pattern during embryogenesis. Expression is predominantly segmented, with expression also seen in the limb primordia and presumptive gonads. In embryonic tracheal cells, expression is close to and dorsal to the tracheal placode.

It is found in the secreted. The protein localises to the extracellular space. The protein resides in the extracellular matrix. Its function is as follows. Binds as a ligand to a family of frizzled seven-transmembrane receptors and acts through a cascade of genes on the nucleus. Segment polarity protein. May function in gonadogenesis and limb development. Wg and Wnt2 have a role in the developing trachea and together are responsible for all dorsal trunk formation. This chain is Protein Wnt-2 (Wnt2), found in Drosophila melanogaster (Fruit fly).